The sequence spans 194 residues: Large ribosomal subunit protein uL22 (194 aa).

It belongs to the universal ribosomal protein uL22 family.

In Aspergillus fumigatus (strain ATCC MYA-4609 / CBS 101355 / FGSC A1100 / Af293) (Neosartorya fumigata), this protein is Large ribosomal subunit protein uL22 (rpl17).